The following is a 208-amino-acid chain: Histone H1.3 (208 aa).

Position 2 is an N-acetylserine (Ser2). An H15 domain is found at 37 to 113 (AHPPYINMVT…GASGRFRVTE (77 aa)). Residues 113–208 (EKKAAAAKKP…PAKKAVAPKT (96 aa)) are disordered. 2 stretches are compositionally biased toward basic residues: residues 148–158 (KAKKTTATKTK) and 165–191 (KKVK…KSAP). The segment covering 192-208 (KKAAAAKPAKKAVAPKT) has biased composition (low complexity).

It belongs to the histone H1/H5 family.

Its subcellular location is the nucleus. The protein resides in the chromosome. Its function is as follows. Histones H1 are necessary for the condensation of nucleosome chains into higher-order structures. This is Histone H1.3 (hil-3) from Caenorhabditis elegans.